The following is a 155-amino-acid chain: MKAKLAEVVEIFTDGACKGNPGVGGWGALLQYNGHRRELFGGEKMTTNNRMELLAVIRALEALTKPCEVRLHTDSLYVQKGISEWIHAWKKRDWRTADKKPVKNDDLWRELDLLTQRHKIEWLWVRGHSGHDGNEYADMLANRGVQTALRGVSAN.

The region spanning Leu-5–Gln-146 is the RNase H type-1 domain. Residues Asp-14, Glu-52, Asp-74, and Asp-138 each coordinate Mg(2+).

It belongs to the RNase H family. Monomer. Mg(2+) serves as cofactor.

Its subcellular location is the cytoplasm. It catalyses the reaction Endonucleolytic cleavage to 5'-phosphomonoester.. In terms of biological role, endonuclease that specifically degrades the RNA of RNA-DNA hybrids. In Nitrosospira multiformis (strain ATCC 25196 / NCIMB 11849 / C 71), this protein is Ribonuclease H.